The primary structure comprises 346 residues: G-protein coupled receptor homolog U12 (346 aa).

At 1 to 31 (MICYSFAKNVTFAFLIILQNFFSQHDEEYKY) the chain is on the extracellular side. A helical membrane pass occupies residues 32–56 (NYTCITPTVRKAQRLESVINGIMLT). At 57–83 (LILPVSTVVICTLLIYYKWTKQTITSP) the chain is on the cytoplasmic side. A helical membrane pass occupies residues 84 to 108 (YLITLFISDSLHSLTVLLLTLNREA). The Extracellular portion of the chain corresponds to 109 to 115 (LTNLNQA). Residues 116-142 (LCQCVLFVYSASCTYSLCMLAVISTIR) form a helical membrane-spanning segment. At 143–159 (YRTLQRRTLNDKNNNHI) the chain is on the cytoplasmic side. The helical transmembrane segment at 160 to 181 (KRNVGILFLSSAMCAIPAVLYV) threads the bilayer. Residues 182–208 (QVEKKKGNYGKCNIHISTQKAYDLFIG) lie on the Extracellular side of the membrane. A helical membrane pass occupies residues 209-229 (IKIVYCFLWGIFPTVIFSYFY). Topologically, residues 230–245 (VIFGKTLRALTQSKHN) are cytoplasmic. The helical transmembrane segment at 246–272 (KTLSFISLLILSFLCIQIPNLLVMSVE) threads the bilayer. The Extracellular portion of the chain corresponds to 273-286 (IFFLYIANTSCLGT). Residues 287 to 310 (IQREIVQIISRLMPEIHCLSNPLV) traverse the membrane as a helical segment. Residues 311 to 346 (YAFTRTDFRLRFYDFIKCNLCNSSLKRKRNPLTIKN) lie on the Cytoplasmic side of the membrane.

This sequence belongs to the G-protein coupled receptor 1 family.

Its subcellular location is the host cell membrane. This Homo sapiens (Human) protein is G-protein coupled receptor homolog U12 (U12).